A 92-amino-acid polypeptide reads, in one-letter code: MARTVHCQHLNKSADGLDFQLYPGELGKRIFDNIGKEAWGLWQKKQTMLINEKKLNMMNVDDRKFLEEQMTNFLFEGKDVEIEGYVPPAEDE.

It belongs to the Fe(2+)-trafficking protein family.

Functionally, could be a mediator in iron transactions between iron acquisition and iron-requiring processes, such as synthesis and/or repair of Fe-S clusters in biosynthetic enzymes. In Shewanella frigidimarina (strain NCIMB 400), this protein is Probable Fe(2+)-trafficking protein.